The chain runs to 438 residues: Tol-Pal system protein TolB (438 aa).

The signal sequence occupies residues 1 to 21 (MVKRSLLVLALLICLPATLFA).

The protein belongs to the TolB family. As to quaternary structure, the Tol-Pal system is composed of five core proteins: the inner membrane proteins TolA, TolQ and TolR, the periplasmic protein TolB and the outer membrane protein Pal. They form a network linking the inner and outer membranes and the peptidoglycan layer.

The protein resides in the periplasm. In terms of biological role, part of the Tol-Pal system, which plays a role in outer membrane invagination during cell division and is important for maintaining outer membrane integrity. The polypeptide is Tol-Pal system protein TolB (Desulfosudis oleivorans (strain DSM 6200 / JCM 39069 / Hxd3) (Desulfococcus oleovorans)).